A 265-amino-acid chain; its full sequence is Tryptophan synthase alpha chain (265 aa).

Active-site proton acceptor residues include E49 and D60.

It belongs to the TrpA family. In terms of assembly, tetramer of two alpha and two beta chains.

The catalysed reaction is (1S,2R)-1-C-(indol-3-yl)glycerol 3-phosphate + L-serine = D-glyceraldehyde 3-phosphate + L-tryptophan + H2O. The protein operates within amino-acid biosynthesis; L-tryptophan biosynthesis; L-tryptophan from chorismate: step 5/5. The alpha subunit is responsible for the aldol cleavage of indoleglycerol phosphate to indole and glyceraldehyde 3-phosphate. This is Tryptophan synthase alpha chain from Cupriavidus pinatubonensis (strain JMP 134 / LMG 1197) (Cupriavidus necator (strain JMP 134)).